We begin with the raw amino-acid sequence, 434 residues long: Probable exopolygalacturonase X (434 aa).

Positions 1–23 are cleaved as a signal peptide; sequence MKFLHTVAQTATLLLSLGASVEG. The interval 35 to 54 is disordered; it reads HHPFRPLPASTPRTKTCHVR. N-linked (GlcNAc...) asparagine glycans are attached at residues Asn-113, Asn-129, and Asn-199. Residues 231–252 form a PbH1 1 repeat; the sequence is SSNIVIQNSVVNNGDDCVSFKP. Asp-245 serves as the catalytic Proton donor. A disulfide bond links Cys-247 and Cys-264. Asn-253 and Asn-265 each carry an N-linked (GlcNAc...) asparagine glycan. The stretch at 254–274 is one PbH1 2 repeat; that stretch reads STDILVQNMHCNGSHGISVGS. The active site involves His-268. N-linked (GlcNAc...) asparagine glycans are attached at residues Asn-292, Asn-297, Asn-329, Asn-354, and Asn-364. The stretch at 327–348 is one PbH1 3 repeat; that stretch reads VSNITYDRMYIENVDWAIEVTQ. The stretch at 362–394 is one PbH1 4 repeat; it reads PSNLTISDVHIKNMWGTTSGKRDPNVGTIVCSS. Cys-392 and Cys-398 are disulfide-bonded. Residues Asn-407 and Asn-430 are each glycosylated (N-linked (GlcNAc...) asparagine).

Belongs to the glycosyl hydrolase 28 family.

It localises to the secreted. It catalyses the reaction [(1-&gt;4)-alpha-D-galacturonosyl](n) + H2O = alpha-D-galacturonate + [(1-&gt;4)-alpha-D-galacturonosyl](n-1). Its function is as follows. Specific in hydrolyzing the terminal glycosidic bond of polygalacturonic acid and oligogalacturonates. The polypeptide is Probable exopolygalacturonase X (pgaX) (Aspergillus terreus (strain NIH 2624 / FGSC A1156)).